A 116-amino-acid polypeptide reads, in one-letter code: MKFTKAEARKRRHFRVRQKVVGTAERPRLNVFKSNTNFYAQIIDDTKGVTLVSASTLKMDLKSKSNTLAAQKVAEEIAKKALAANITQVVFDRNGYLYHGKIKAFAETARENGLKF.

The protein belongs to the universal ribosomal protein uL18 family. Part of the 50S ribosomal subunit; part of the 5S rRNA/L5/L18/L25 subcomplex. Contacts the 5S and 23S rRNAs.

Functionally, this is one of the proteins that bind and probably mediate the attachment of the 5S RNA into the large ribosomal subunit, where it forms part of the central protuberance. This Mycoplasma mycoides subsp. mycoides SC (strain CCUG 32753 / NCTC 10114 / PG1) protein is Large ribosomal subunit protein uL18.